The primary structure comprises 109 residues: Large ribosomal subunit protein uL22 (109 aa).

Belongs to the universal ribosomal protein uL22 family. In terms of assembly, part of the 50S ribosomal subunit.

This protein binds specifically to 23S rRNA; its binding is stimulated by other ribosomal proteins, e.g. L4, L17, and L20. It is important during the early stages of 50S assembly. It makes multiple contacts with different domains of the 23S rRNA in the assembled 50S subunit and ribosome. Its function is as follows. The globular domain of the protein is located near the polypeptide exit tunnel on the outside of the subunit, while an extended beta-hairpin is found that lines the wall of the exit tunnel in the center of the 70S ribosome. The polypeptide is Large ribosomal subunit protein uL22 (Dehalococcoides mccartyi (strain ATCC BAA-2100 / JCM 16839 / KCTC 5957 / BAV1)).